A 556-amino-acid polypeptide reads, in one-letter code: Myb/SANT-like DNA-binding domain-containing protein 2 (556 aa).

Composition is skewed to polar residues over residues 1–10 and 36–45; these read MAASCGSSQL and GNPSLSDPST. A disordered region spans residues 1–82; sequence MAASCGSSQL…GGASPSVSFS (82 aa). Residues 56-74 show a composition bias toward gly residues; the sequence is PAAGGAGLGGGGAAGGRGG. The region spanning 99–169 is the Myb-like domain; the sequence is SWTPAETNAL…QCRERIKTLR (71 aa). The tract at residues 431–458 is disordered; that stretch reads PRSPLAEPRGADPSNETPGELEVPSPQA.

The polypeptide is Myb/SANT-like DNA-binding domain-containing protein 2 (MSANTD2) (Gallus gallus (Chicken)).